We begin with the raw amino-acid sequence, 172 residues long: Dehydratase cfoI (172 aa).

Catalysis depends on residues His86 and His111.

Belongs to the scytalone dehydratase family. As to quaternary structure, homotrimer. Each subunit contains an active site, located in the central part of the hydrophobic core of the monomer, which functions independently.

The protein operates within secondary metabolite biosynthesis; flavonoid biosynthesis. Functionally, cytochrome P450 monooxygenase; part of the gene cluster that mediates the biosynthesis of chlorflavonin, a fungal flavonoid with acetolactate synthase inhibitory activity. Within the pathway, cfoI is responsible for the hydroxylation of the flavonoid skeleton at position C3 with cfoF. The pathway begins with the PKS-NRPS hybrid synthetase cfoA that uses benzoic acid or p-hydroxybenzoic acid as a starter unit with four rounds of chain elongation using malonyl-CoA to form the chalcone skeleton. Then, a new type of chalcone isomerase, cfoK, catalyzes the conversion of the chalcone into a flavanone by a histidine-mediated oxa-Michael addition mechanism. The desaturation of flavanone to flavone is catalyzed by a new type of flavone synthase, the flavin mononucleotide (FMN)-dependent oxidoreductase cfoJ. Monooxygenases cfoF, cfoG, and P450 cfoH are responsible for the hydroxylation of the flavonoid skeleton at sites C3, C8, and C2', respectively. Like cfoF, the dehydratase cfoI plays also a role in the hydroxylation of position C3. Methyltransferases cfoB, cfoC, and cfoD then catalyze the methylation of C7-OH, C8-OH, and C3-OH, respectively. Finally, the monooxygenase cfoE is responsible for the chlorination of flavonoid at position C3'. The chain is Dehydratase cfoI from Aspergillus candidus.